Consider the following 1520-residue polypeptide: Accessory colonization factor AcfD (1520 aa).

Residues 1-16 (MKIRIVSLIVLGFLIG) form the signal peptide. Cysteine 17 is lipidated: N-palmitoyl cysteine. Residue cysteine 17 is the site of S-diacylglycerol cysteine attachment. Residues 1085–1388 (GNRQPTGQWA…MFAQLKEWAE (304 aa)) form the Peptidase M60 domain.

Its subcellular location is the cell membrane. This chain is Accessory colonization factor AcfD (acfD), found in Vibrio cholerae serotype O1 (strain ATCC 39315 / El Tor Inaba N16961).